Here is a 1181-residue protein sequence, read N- to C-terminus: HEAT repeat-containing protein 6 (1181 aa).

One copy of the HEAT 1 repeat lies at 159–198 (LELLGETGLLMKLSDLAQSDPEVRRAAVHCMANLCLSVPG). Disordered stretches follow at residues 294-347 (DGRT…PVTG) and 371-407 (LDGSGAAGKDGVSSPFSSSSWKRVSSSESDFSDAEGG). Over residues 300–312 (KPQQSESSASRPT) the composition is skewed to polar residues. The span at 313–325 (LNKKKKSKVKPKK) shows a compositional bias: basic residues. Ser-336, Ser-337, Ser-399, and Ser-402 each carry phosphoserine. Residues 383 to 399 (SSPFSSSSWKRVSSSES) are compositionally biased toward low complexity. HEAT repeat units lie at residues 452–490 (ELGSPQSVSLMTLTLKDPSPKTRACALQVLSAILEGSKQ), 514–552 (SSIRELHRCLLLALVAESSSQTLTQIIKCLANLVSDAPY), and 558–595 (SLLTKVWNQIKPYIRHKDVNVRVSSLTLLGAIVSTHAP). Residues 613–648 (NSNSATPHLSPPDWWKKAPAGPSLEETSVSSPKGSS) form a disordered region. Phosphothreonine is present on Thr-618. Positions 637–646 (EETSVSSPKG) are enriched in polar residues. The residue at position 643 (Ser-643) is a Phosphoserine.

The chain is HEAT repeat-containing protein 6 (HEATR6) from Pongo abelii (Sumatran orangutan).